The sequence spans 1325 residues: Nucleoporin nup146 (1325 aa).

Disordered regions lie at residues methionine 1–serine 20, valine 453–asparagine 474, glycine 758–histidine 951, and phenylalanine 973–leucine 994. Polar residues predominate over residues glutamine 763 to leucine 778. Positions serine 779 to glutamate 791 are enriched in basic and acidic residues. Residues threonine 792–lysine 801 show a composition bias toward polar residues. A compositionally biased stretch (basic and acidic residues) spans glutamine 802–glycine 811. Polar residues-rich tracts occupy residues alanine 816–serine 835 and phenylalanine 850–phenylalanine 861. The span at leucine 867–aspartate 881 shows a compositional bias: basic and acidic residues. Phosphothreonine is present on threonine 899. A compositionally biased stretch (acidic residues) spans serine 927 to serine 937. A Phosphothreonine modification is found at threonine 946. Serine 1041, serine 1043, and serine 1044 each carry phosphoserine.

The protein resides in the cytoplasm. Its subcellular location is the nucleus. Functionally, functions as a component of the nuclear pore complex (NPC). NPC components, collectively referred to as nucleoporins (NUPs), can play the role of both NPC structural components and of docking or interaction partners for transiently associated nuclear transport factors. Active directional transport is assured by both, a Phe-Gly (FG) repeat affinity gradient for these transport factors across the NPC and a transport cofactor concentration gradient across the nuclear envelope. The polypeptide is Nucleoporin nup146 (nup146) (Schizosaccharomyces pombe (strain 972 / ATCC 24843) (Fission yeast)).